A 488-amino-acid chain; its full sequence is Glutamyl-tRNA(Gln) amidotransferase subunit A (488 aa).

Active-site charge relay system residues include K78 and S153. S177 functions as the Acyl-ester intermediate in the catalytic mechanism.

It belongs to the amidase family. GatA subfamily. Heterotrimer of A, B and C subunits.

The catalysed reaction is L-glutamyl-tRNA(Gln) + L-glutamine + ATP + H2O = L-glutaminyl-tRNA(Gln) + L-glutamate + ADP + phosphate + H(+). Functionally, allows the formation of correctly charged Gln-tRNA(Gln) through the transamidation of misacylated Glu-tRNA(Gln) in organisms which lack glutaminyl-tRNA synthetase. The reaction takes place in the presence of glutamine and ATP through an activated gamma-phospho-Glu-tRNA(Gln). This is Glutamyl-tRNA(Gln) amidotransferase subunit A from Thermoanaerobacter pseudethanolicus (strain ATCC 33223 / 39E) (Clostridium thermohydrosulfuricum).